A 163-amino-acid polypeptide reads, in one-letter code: Cytochrome c-type biogenesis protein CcmE (163 aa).

The Cytoplasmic segment spans residues 1–8; that stretch reads MNPRRKKR. A helical; Signal-anchor for type II membrane protein membrane pass occupies residues 9–29; that stretch reads LTIILAISAGLAAVIGLVLYA. The Periplasmic segment spans residues 30–163; that stretch reads LSQNIDLFYT…TEAQLKGSKQ (134 aa). 2 residues coordinate heme: histidine 131 and tyrosine 135.

Belongs to the CcmE/CycJ family.

The protein localises to the cell inner membrane. Functionally, heme chaperone required for the biogenesis of c-type cytochromes. Transiently binds heme delivered by CcmC and transfers the heme to apo-cytochromes in a process facilitated by CcmF and CcmH. In Aeromonas hydrophila subsp. hydrophila (strain ATCC 7966 / DSM 30187 / BCRC 13018 / CCUG 14551 / JCM 1027 / KCTC 2358 / NCIMB 9240 / NCTC 8049), this protein is Cytochrome c-type biogenesis protein CcmE.